A 324-amino-acid chain; its full sequence is MATH domain and coiled-coil domain-containing protein At3g44790 (324 aa).

Positions 3 to 125 (YEKFTWVIKN…NNEVKIVVEV (123 aa)) constitute an MATH domain. Positions 241 to 309 (FKVDWLERKL…ALLEKEKAKS (69 aa)) form a coiled coil.

The chain is MATH domain and coiled-coil domain-containing protein At3g44790 from Arabidopsis thaliana (Mouse-ear cress).